The chain runs to 186 residues: Ribosome-recycling factor (186 aa).

Positions 140 to 163 (LKKAEKDGDIGQDEGRSLSERVQK) are disordered.

This sequence belongs to the RRF family.

The protein resides in the cytoplasm. Responsible for the release of ribosomes from messenger RNA at the termination of protein biosynthesis. May increase the efficiency of translation by recycling ribosomes from one round of translation to another. This Rhizobium rhizogenes (strain K84 / ATCC BAA-868) (Agrobacterium radiobacter) protein is Ribosome-recycling factor.